A 77-amino-acid polypeptide reads, in one-letter code: Putative defensin-like protein 120 (77 aa).

An N-terminal signal peptide occupies residues 1-26 (MTQKATILAIFMVVLVLGLETKETQG). 4 disulfides stabilise this stretch: cysteine 30–cysteine 75, cysteine 39–cysteine 60, cysteine 44–cysteine 69, and cysteine 48–cysteine 71.

The protein belongs to the DEFL family.

It localises to the secreted. The sequence is that of Putative defensin-like protein 120 (LCR56) from Arabidopsis thaliana (Mouse-ear cress).